Reading from the N-terminus, the 1073-residue chain is Serine/threonine-protein phosphatase 6 regulatory ankyrin repeat subunit C (1073 aa).

28 ANK repeats span residues 7–36 (TDQP…NINV), 40–69 (ERRT…NVNA), 73–102 (VWLT…DVNA), 106–135 (YWQT…TVNV), 139–168 (TGRT…SLST), 172–201 (KDRQ…DVMC), 205–234 (KGYT…EIDE), 238–267 (FGNT…NVNQ), 271–301 (KGFT…DVNF), 305–334 (EGKS…EIDC), 338–367 (YGNT…DTAR), 371–400 (HDMF…LYSI), 422–451 (LGRT…DLRR), 455–484 (FGRT…SINE), 488–544 (KGCT…DPSL), 548–578 (QGYT…CLED), 583–612 (IPVS…NLDV), 616–645 (KGRT…SALV), 650–679 (RKWT…RADI), 686–715 (HGQT…TADA), 719–748 (RGRT…FVLC), 752–781 (KGRT…STDP), 789–818 (SGYS…FAYL), 821–851 (NPFT…KIVN), 856–885 (KGRT…EVDT), 889–919 (LGRT…NITV), 923–952 (NKNT…DLGL), and 959–988 (ALQM…TVLA).

As to quaternary structure, protein phosphatase 6 (PP6) holoenzyme is proposed to be a heterotrimeric complex formed by the catalytic subunit, a SAPS domain-containing subunit (PP6R) and an ankyrin repeat-domain containing regulatory subunit (ARS).

Putative regulatory subunit of protein phosphatase 6 (PP6) that may be involved in the recognition of phosphoprotein substrates. The polypeptide is Serine/threonine-protein phosphatase 6 regulatory ankyrin repeat subunit C (ANKRD52) (Gallus gallus (Chicken)).